Consider the following 444-residue polypeptide: Serine carboxypeptidase 2 (444 aa).

60–62 (NGG) serves as a coordination point for substrate. Intrachain disulfides connect cysteine 65-cysteine 324, cysteine 222-cysteine 234, and cysteine 258-cysteine 291. N-linked (GlcNAc...) asparagine glycans are attached at residues asparagine 116 and asparagine 127. A substrate-binding site is contributed by 157 to 159 (ESY). Serine 158 is an active-site residue. A glycan (N-linked (GlcNAc...) asparagine) is linked at asparagine 259. Positions 260 to 286 (ITSSSSSSSSSLSQQRRSRGRYPWLTG) are cleaved as a propeptide — linker peptide. Asparagine 312 and asparagine 318 each carry an N-linked (GlcNAc...) asparagine glycan. Active-site residues include aspartate 361 and histidine 413. Residue 409-413 (RGAGH) coordinates substrate.

It belongs to the peptidase S10 family. In terms of assembly, carboxypeptidase II is a dimer, where each monomer is composed of two chains linked by a disulfide bond. Post-translationally, N-glycosylated.

It catalyses the reaction Preferential release of a C-terminal arginine or lysine residue.. This Triticum aestivum (Wheat) protein is Serine carboxypeptidase 2 (CBP2).